The primary structure comprises 521 residues: Probable xyloglucan galactosyltransferase GT14 (521 aa).

Over 1 to 30 (MRPKNYSQMEKPISITTGKFRTNNNNNHNN) the chain is Cytoplasmic. The chain crosses the membrane as a helical; Signal-anchor for type II membrane protein span at residues 31-51 (VWFVVPLFFILCFVLLCFDYS). The Lumenal segment spans residues 52-521 (ALFTDTDETA…SPYEEPQVLA (470 aa)). A disordered region spans residues 72–92 (TSSEFTKDDNFSRFPDDPSPD). A compositionally biased stretch (basic and acidic residues) spans 76–87 (FTKDDNFSRFPD). Residues Asn81, Asn177, Asn203, Asn249, Asn265, and Asn411 are each glycosylated (N-linked (GlcNAc...) asparagine). A disordered region spans residues 492–521 (RQGKDGSDGFDDRDDYKYTFSPYEEPQVLA).

The protein belongs to the glycosyltransferase 47 family. As to expression, expressed in roots, hypocotyls, cotyledons, leaves, stems, stamens and carpels.

The protein localises to the golgi apparatus membrane. In terms of biological role, functions in xyloglucan synthesis by adding side chains to the xylosylated glucan backbone. Involved in the galactosylation of hemicellulose xyloglucan. The protein is Probable xyloglucan galactosyltransferase GT14 of Arabidopsis thaliana (Mouse-ear cress).